Consider the following 327-residue polypeptide: Ornithine carbamoyltransferase, mitochondrial (327 aa).

Residues 63 to 66, arginine 114, histidine 141, and glutamine 144 contribute to the carbamoyl phosphate site; that span reads STRT. L-ornithine-binding residues include asparagine 172, aspartate 236, serine 240, and methionine 241. Cysteine 276 acts as the Proton acceptor in catalysis. Residues 276–277 and arginine 303 each bind carbamoyl phosphate; that span reads CL.

Belongs to the aspartate/ornithine carbamoyltransferase superfamily. OTCase family. As to quaternary structure, interacts with trx2.

Its subcellular location is the mitochondrion matrix. It catalyses the reaction carbamoyl phosphate + L-ornithine = L-citrulline + phosphate + H(+). It participates in amino-acid biosynthesis; L-arginine biosynthesis; L-arginine from L-ornithine and carbamoyl phosphate: step 1/3. Functionally, ornithine carbamoyltransferase involved in the synthesis of arginine from glutamate via ornithine and the urea cycle. The sequence is that of Ornithine carbamoyltransferase, mitochondrial (arg3) from Schizosaccharomyces pombe (strain 972 / ATCC 24843) (Fission yeast).